A 481-amino-acid polypeptide reads, in one-letter code: Aromatic amino acid aminotransferase C1773.13 (481 aa).

This sequence belongs to the class-I pyridoxal-phosphate-dependent aminotransferase family. Pyridoxal 5'-phosphate is required as a cofactor.

Its subcellular location is the cytoplasm. The catalysed reaction is an aromatic L-alpha-amino acid + 2-oxoglutarate = an aromatic oxo-acid + L-glutamate. Functionally, has aromatic amino acid transaminase activity. The polypeptide is Aromatic amino acid aminotransferase C1773.13 (Schizosaccharomyces pombe (strain 972 / ATCC 24843) (Fission yeast)).